Reading from the N-terminus, the 155-residue chain is Trypsin/factor XIIA inhibitor (155 aa).

A signal peptide spans M1 to A28. Cystine bridges form between C34–C83, C48–C72, C57–C114, C73–C132, and C85–C143. Residue R62 is part of the active site. Positions G139–K155 are cleaved as a propeptide — C-terminal peptide.

This sequence belongs to the protease inhibitor I6 (cereal trypsin/alpha-amylase inhibitor) family. In terms of assembly, monomer.

The protein resides in the secreted. In terms of biological role, potent inhibitor of mammalian trypsin and a specific inhibitor of factor XIIa (activated hageman factor). The protein is Trypsin/factor XIIA inhibitor of Zea mays (Maize).